Here is a 217-residue protein sequence, read N- to C-terminus: Large ribosomal subunit protein uL3 (217 aa).

Residues 127-162 (GFSRGPMSHGSKNHRAPGSTGAGTTPGRIYPGKRMA) are disordered. Positions 142-153 (APGSTGAGTTPG) are enriched in low complexity.

It belongs to the universal ribosomal protein uL3 family. In terms of assembly, part of the 50S ribosomal subunit. Forms a cluster with proteins L14 and L19.

Its function is as follows. One of the primary rRNA binding proteins, it binds directly near the 3'-end of the 23S rRNA, where it nucleates assembly of the 50S subunit. The polypeptide is Large ribosomal subunit protein uL3 (Prochlorococcus marinus (strain MIT 9301)).